The primary structure comprises 171 residues: MYAVIKTGGKQYRVQAGDLLVVEKLEGEPGAAVAFGEVLMLGEGEAVTVGAPTVDGAVVSGTLLETRKGEKVKIFKKIRRQGYRRTRGHRQFESVVRVTSVAGAGKEAKWEGTIDLTPKVILDARARGLGDAAVPATIPAPVEAAPAKAEAAPKKKAAPKKAAAKTEEGEA.

Residues 144–171 (AAPAKAEAAPKKKAAPKKAAAKTEEGEA) form a disordered region. Residues 154–163 (KKKAAPKKAA) show a composition bias toward basic residues.

Belongs to the bacterial ribosomal protein bL21 family. In terms of assembly, part of the 50S ribosomal subunit. Contacts protein L20.

Functionally, this protein binds to 23S rRNA in the presence of protein L20. This is Large ribosomal subunit protein bL21 from Caulobacter vibrioides (strain ATCC 19089 / CIP 103742 / CB 15) (Caulobacter crescentus).